A 606-amino-acid chain; its full sequence is NADH-ubiquinone oxidoreductase chain 5 (606 aa).

15 helical membrane passes run 3–23 (VINLIPTLMLTSLIILTLPII), 38–58 (ITKTAVTYAFAISLIPTLLFI), 87–107 (FFSLTFMPIALFITWSIMEFS), 124–144 (LLLFLITMLILVSANNLLQLF), 180–200 (IGDMGFIMMMAWFTIHLNSWE), 216–236 (LLGLLLASAGKSAQFGLHPWL), 244–264 (TPVSALLHSSTMVMAGVFTLI), 276–296 (IQTSTLCLGAITTLFTAICAL), 304–323 (IIALSTSSQLGLMMVTIGIN), 328–350 (AFIHMCTHAFFKAMLFLSSGSII), 369–389 (MPITSTAIIIGSLALTGMPFL), 404–424 (MSYINTWALLITLIAVSMTAS), 460–480 (LILGSIFMGFLISMNTIPHTT), 483–503 (MTMPPHLKFMALAVTLLGFTV), and 586–606 (LMKLYFLSFLLSITLGLLIAL).

The protein belongs to the complex I subunit 5 family. As to quaternary structure, core subunit of respiratory chain NADH dehydrogenase (Complex I) which is composed of 45 different subunits.

It localises to the mitochondrion inner membrane. It carries out the reaction a ubiquinone + NADH + 5 H(+)(in) = a ubiquinol + NAD(+) + 4 H(+)(out). Core subunit of the mitochondrial membrane respiratory chain NADH dehydrogenase (Complex I) which catalyzes electron transfer from NADH through the respiratory chain, using ubiquinone as an electron acceptor. Essential for the catalytic activity and assembly of complex I. This chain is NADH-ubiquinone oxidoreductase chain 5 (MT-ND5), found in Loxodonta africana (African elephant).